Reading from the N-terminus, the 232-residue chain is GFP-like non-fluorescent chromoprotein FP595 (232 aa).

A cross-link (2-iminomethyl-5-imidazolinone (Met-Gly)) is located at residues methionine 63–glycine 65. (E)-2,3-didehydrotyrosine is present on tyrosine 64.

Belongs to the GFP family. Post-translationally, contains a chromophore consisting of modified amino acid residues. The chromophore is formed by autocatalytic backbone condensation between Xaa-N and Gly-(N+2), oxidation of Tyr-(N+1) to didehydrotyrosine, and formation of a double bond to the alpha-amino nitrogen of residue Tyr-(N+1). Maturation of the chromophore requires nothing other than molecular oxygen. Tentacle tips.

Functionally, pigment protein that is intensely purple in color. The protein is GFP-like non-fluorescent chromoprotein FP595 of Anemonia sulcata (Mediterranean snakelocks sea anemone).